A 547-amino-acid polypeptide reads, in one-letter code: Phosphomethylpyrimidine synthase (547 aa).

Substrate contacts are provided by residues Asn-146, Met-175, Tyr-204, His-240, 260-262, 301-304, and Glu-340; these read SRG and DGLR. His-344 is a binding site for Zn(2+). Position 367 (Tyr-367) interacts with substrate. Residue His-408 participates in Zn(2+) binding. 3 residues coordinate [4Fe-4S] cluster: Cys-488, Cys-491, and Cys-496.

This sequence belongs to the ThiC family. [4Fe-4S] cluster is required as a cofactor.

The enzyme catalyses 5-amino-1-(5-phospho-beta-D-ribosyl)imidazole + S-adenosyl-L-methionine = 4-amino-2-methyl-5-(phosphooxymethyl)pyrimidine + CO + 5'-deoxyadenosine + formate + L-methionine + 3 H(+). The protein operates within cofactor biosynthesis; thiamine diphosphate biosynthesis. Its function is as follows. Catalyzes the synthesis of the hydroxymethylpyrimidine phosphate (HMP-P) moiety of thiamine from aminoimidazole ribotide (AIR) in a radical S-adenosyl-L-methionine (SAM)-dependent reaction. In Mycobacterium bovis (strain ATCC BAA-935 / AF2122/97), this protein is Phosphomethylpyrimidine synthase.